A 213-amino-acid chain; its full sequence is Thymidylate kinase (213 aa).

An ATP-binding site is contributed by 10–17 (GLEGAGKT).

The protein belongs to the thymidylate kinase family.

The catalysed reaction is dTMP + ATP = dTDP + ADP. Phosphorylation of dTMP to form dTDP in both de novo and salvage pathways of dTTP synthesis. The chain is Thymidylate kinase from Shigella boydii serotype 18 (strain CDC 3083-94 / BS512).